A 176-amino-acid polypeptide reads, in one-letter code: Small ribosomal subunit protein uS5 (176 aa).

The 64-residue stretch at 11 to 74 folds into the S5 DRBM domain; the sequence is LSEVLVDVNR…QAAKKRMMKV (64 aa).

The protein belongs to the universal ribosomal protein uS5 family. In terms of assembly, part of the 30S ribosomal subunit. Contacts proteins S4 and S8.

Functionally, with S4 and S12 plays an important role in translational accuracy. In terms of biological role, located at the back of the 30S subunit body where it stabilizes the conformation of the head with respect to the body. This Rickettsia akari (strain Hartford) protein is Small ribosomal subunit protein uS5.